Reading from the N-terminus, the 510-residue chain is MEEIQRYLQPDRSQQHNFLYPLIFQEYIYALAHDHGLNINRSILLENPGYNNQLSLLIVKRLITRMYPQNHFFICTNDSNQNPFLGCNKSLYSQMISEGFAFILEIPFSLQLISSSSLSLEGKNVFKSHNLRSIHSTFPFLEDNFSHLNYVLDILIPYPVHLEILXQTLRYWVKDASSLHLLRFFLHEYWNLNSLITPKKPGYSFSKKKKRFFFFLYNSYVYECESTFVFLRNQSYHLRSTSFGALLERIYFYGKIECLVEVFAKDFQXTLWLFKDPXMHYVRYQGKSILASKGTFLLMNKWKFYLVNFWQCHFSXCFETGRIHINQLSNHSRDFLGYLSSVRLNPSMVRSQILENSFLINNAIKKFDTLVPIIPLIGSLAKANFCTVLGHPISKPVWSDLSDSDIIDRFGRICRKLFHYYSGSSKKKTLYRIKYILRLSCGRTLARKHKSTVRAFLKRSGSELLEEFLTSEEQVLSLTFRRASSSLWGVYRNRIWYLDIFSINDLANYQ.

This sequence belongs to the intron maturase 2 family. MatK subfamily.

It is found in the plastid. The protein resides in the chloroplast. Functionally, usually encoded in the trnK tRNA gene intron. Probably assists in splicing its own and other chloroplast group II introns. The chain is Maturase K from Cestrum elegans (Red cestrum).